We begin with the raw amino-acid sequence, 548 residues long: Glucose-6-phosphate isomerase 1 (548 aa).

Glutamate 353 serves as the catalytic Proton donor. Residues histidine 384 and lysine 512 contribute to the active site.

This sequence belongs to the GPI family.

It is found in the cytoplasm. The catalysed reaction is alpha-D-glucose 6-phosphate = beta-D-fructose 6-phosphate. It functions in the pathway carbohydrate biosynthesis; gluconeogenesis. It participates in carbohydrate degradation; glycolysis; D-glyceraldehyde 3-phosphate and glycerone phosphate from D-glucose: step 2/4. In terms of biological role, catalyzes the reversible isomerization of glucose-6-phosphate to fructose-6-phosphate. The polypeptide is Glucose-6-phosphate isomerase 1 (Neisseria meningitidis serogroup A / serotype 4A (strain DSM 15465 / Z2491)).